The primary structure comprises 23 residues: Pseudin-3 (23 aa).

In terms of tissue distribution, expressed by the skin glands.

Its subcellular location is the secreted. Functionally, possesses antifungal activity against C.albicans and is also active against E.coli and S.aureus. The protein is Pseudin-3 of Pseudis paradoxa (Paradoxical frog).